A 346-amino-acid chain; its full sequence is uncharacterized protein (346 aa).

The chain crosses the membrane as a helical span at residues I16–T36.

It is found in the membrane. This is an uncharacterized protein from Methanocaldococcus jannaschii (strain ATCC 43067 / DSM 2661 / JAL-1 / JCM 10045 / NBRC 100440) (Methanococcus jannaschii).